We begin with the raw amino-acid sequence, 187 residues long: dCTP deaminase (187 aa).

DCTP-binding positions include 107-112 (KSTYAR), 131-133 (TLE), Gln-152, Tyr-166, Lys-175, and Gln-176. The active-site Proton donor/acceptor is the Glu-133.

It belongs to the dCTP deaminase family. Homotrimer.

The catalysed reaction is dCTP + H2O + H(+) = dUTP + NH4(+). It participates in pyrimidine metabolism; dUMP biosynthesis; dUMP from dCTP (dUTP route): step 1/2. Functionally, catalyzes the deamination of dCTP to dUTP. This Ehrlichia canis (strain Jake) protein is dCTP deaminase.